We begin with the raw amino-acid sequence, 234 residues long: Ribonuclease HII (234 aa).

An RNase H type-2 domain is found at 30–221 (GPVAGVDEAG…VRNAAMGSSL (192 aa)). A divalent metal cation-binding residues include Asp-36, Glu-37, and Asp-130.

The protein belongs to the RNase HII family. Requires Mn(2+) as cofactor. Mg(2+) is required as a cofactor.

It localises to the cytoplasm. It carries out the reaction Endonucleolytic cleavage to 5'-phosphomonoester.. In terms of biological role, endonuclease that specifically degrades the RNA of RNA-DNA hybrids. This is Ribonuclease HII from Mycobacteroides abscessus (strain ATCC 19977 / DSM 44196 / CCUG 20993 / CIP 104536 / JCM 13569 / NCTC 13031 / TMC 1543 / L948) (Mycobacterium abscessus).